Here is a 451-residue protein sequence, read N- to C-terminus: Methylenetetrahydrofolate--tRNA-(uracil-5-)-methyltransferase TrmFO (451 aa).

FAD is bound at residue 18–23 (GGGLAG).

Belongs to the MnmG family. TrmFO subfamily. FAD serves as cofactor.

The protein localises to the cytoplasm. It carries out the reaction uridine(54) in tRNA + (6R)-5,10-methylene-5,6,7,8-tetrahydrofolate + NADH + H(+) = 5-methyluridine(54) in tRNA + (6S)-5,6,7,8-tetrahydrofolate + NAD(+). The enzyme catalyses uridine(54) in tRNA + (6R)-5,10-methylene-5,6,7,8-tetrahydrofolate + NADPH + H(+) = 5-methyluridine(54) in tRNA + (6S)-5,6,7,8-tetrahydrofolate + NADP(+). Its function is as follows. Catalyzes the folate-dependent formation of 5-methyl-uridine at position 54 (M-5-U54) in all tRNAs. The polypeptide is Methylenetetrahydrofolate--tRNA-(uracil-5-)-methyltransferase TrmFO (Synechococcus sp. (strain JA-3-3Ab) (Cyanobacteria bacterium Yellowstone A-Prime)).